Here is a 209-residue protein sequence, read N- to C-terminus: uncharacterized protein (209 aa).

The stretch at 39–75 forms a coiled coil; it reads VSFENFMERYDTMEKNIQDLQNKYEEMANNLVAVMAD. The tract at residues 103–131 is disordered; it reads TMKDATSLPPPNPNNEQSVFTNGSPTSGK. Over residues 116–129 the composition is skewed to polar residues; the sequence is NNEQSVFTNGSPTS.

The protein belongs to the asfivirus K205R family.

The protein resides in the host cytoplasm. In terms of biological role, induces host endoplasmic reticulum stress and consequently activates autophagy and NF-kappa-B signaling pathway. In turn, may induce autophagy-mediated STING1 degradation and innate immune evasion. This is an uncharacterized protein from Ornithodoros (relapsing fever ticks).